The chain runs to 292 residues: 2-hydroxy-3-oxopropionate reductase (292 aa).

Residues 4 to 18 (GFIGLGIMGTPMAIN) and Ser94 each bind NAD(+). Lys169 is a catalytic residue. Lys237 provides a ligand contact to NAD(+).

The protein belongs to the HIBADH-related family.

It catalyses the reaction (R)-glycerate + NADP(+) = 2-hydroxy-3-oxopropanoate + NADPH + H(+). It carries out the reaction (R)-glycerate + NAD(+) = 2-hydroxy-3-oxopropanoate + NADH + H(+). The protein operates within organic acid metabolism; glycolate degradation; 3-phospho-D-glycerate from glycolate: step 3/4. The chain is 2-hydroxy-3-oxopropionate reductase (glxR) from Escherichia coli (strain K12).